The following is a 431-amino-acid chain: Serine--tRNA ligase (431 aa).

237 to 239 contributes to the L-serine binding site; sequence TAE. An ATP-binding site is contributed by 268-270; it reads RSE. Residue E291 participates in L-serine binding. An ATP-binding site is contributed by 355–358; it reads EISS. L-serine is bound at residue S390.

The protein belongs to the class-II aminoacyl-tRNA synthetase family. Type-1 seryl-tRNA synthetase subfamily. Homodimer. The tRNA molecule binds across the dimer.

The protein localises to the cytoplasm. It catalyses the reaction tRNA(Ser) + L-serine + ATP = L-seryl-tRNA(Ser) + AMP + diphosphate + H(+). It carries out the reaction tRNA(Sec) + L-serine + ATP = L-seryl-tRNA(Sec) + AMP + diphosphate + H(+). It participates in aminoacyl-tRNA biosynthesis; selenocysteinyl-tRNA(Sec) biosynthesis; L-seryl-tRNA(Sec) from L-serine and tRNA(Sec): step 1/1. Its function is as follows. Catalyzes the attachment of serine to tRNA(Ser). Is also able to aminoacylate tRNA(Sec) with serine, to form the misacylated tRNA L-seryl-tRNA(Sec), which will be further converted into selenocysteinyl-tRNA(Sec). The chain is Serine--tRNA ligase from Neisseria meningitidis serogroup C (strain 053442).